A 95-amino-acid chain; its full sequence is MLKPLGDRVVVQLKEEKEQTVGGFVLAGASQEKTKKAQVVAVGEGVRTLTGELVASSLVQGDTILIENHVGTPVKDDGKDCLIIREADVLAVVND.

Belongs to the GroES chaperonin family. Heptamer of 7 subunits arranged in a ring. Interacts with the chaperonin GroEL.

The protein resides in the cytoplasm. Its function is as follows. Together with the chaperonin GroEL, plays an essential role in assisting protein folding. The GroEL-GroES system forms a nano-cage that allows encapsulation of the non-native substrate proteins and provides a physical environment optimized to promote and accelerate protein folding. GroES binds to the apical surface of the GroEL ring, thereby capping the opening of the GroEL channel. This chain is Co-chaperonin GroES, found in Streptococcus mutans serotype c (strain ATCC 700610 / UA159).